We begin with the raw amino-acid sequence, 108 residues long: Pumilarin (108 aa).

The propeptide occupies 1–38; that stretch reads MTETKNEIKLHVLFGALAVGFLMLALFSFSLQMLPVAD. Positions 39 to 108 form a cross-link, cyclopeptide (Leu-Trp); the sequence is LAKEFGIPGS…KKGRKAVIAW (70 aa).

In terms of processing, the cross-link permits a high resistance to proteolysis. Is more resistant to specific proteases than to unspecific proteases.

It localises to the secreted. Cyclopeptide antibiotic that inhibits both Gram-positive and Gram-negative bacteria. Shows potent to weak activities against M.flavus (MIC=3 ug/ml), B.cereus (MIC=12 ug/ml), B.pumilus (MIC=12 ug/ml), E.coli (MIC=12 ug/ml), and S.pneumoniae (MIC=47 ug/ml). May act by forming pores. The protein is Pumilarin of Bacillus safensis.